A 212-amino-acid chain; its full sequence is Deoxyribose-phosphate aldolase (212 aa).

The active-site Proton donor/acceptor is the Asp-89. The active-site Schiff-base intermediate with acetaldehyde is the Lys-151. Lys-180 (proton donor/acceptor) is an active-site residue.

This sequence belongs to the DeoC/FbaB aldolase family. DeoC type 1 subfamily.

It localises to the cytoplasm. It catalyses the reaction 2-deoxy-D-ribose 5-phosphate = D-glyceraldehyde 3-phosphate + acetaldehyde. It functions in the pathway carbohydrate degradation; 2-deoxy-D-ribose 1-phosphate degradation; D-glyceraldehyde 3-phosphate and acetaldehyde from 2-deoxy-alpha-D-ribose 1-phosphate: step 2/2. Catalyzes a reversible aldol reaction between acetaldehyde and D-glyceraldehyde 3-phosphate to generate 2-deoxy-D-ribose 5-phosphate. The chain is Deoxyribose-phosphate aldolase from Clostridium botulinum (strain Okra / Type B1).